The sequence spans 110 residues: UPF0060 membrane protein Haur_1798 (110 aa).

The next 4 helical transmembrane spans lie at 7–27 (VVLF…VWQW), 33–53 (SIWF…LPTL), 63–83 (VYAA…WLID), and 89–109 (QPSL…LYWP).

The protein belongs to the UPF0060 family.

The protein localises to the cell membrane. The polypeptide is UPF0060 membrane protein Haur_1798 (Herpetosiphon aurantiacus (strain ATCC 23779 / DSM 785 / 114-95)).